A 541-amino-acid polypeptide reads, in one-letter code: T-complex protein 1 subunit epsilon (541 aa).

Position 2 is an N-acetylalanine (Ala2). A Glycyl lysine isopeptide (Lys-Gly) (interchain with G-Cter in SUMO2) cross-link involves residue Lys20. At Ser26 the chain carries Phosphoserine. Position 53 (Gly53) interacts with ADP. Gly53 provides a ligand contact to ATP. Mg(2+) is bound at residue Asp104. ADP is bound by residues Gly105, Thr106, Thr107, and Ser175. ATP-binding residues include Thr106 and Thr107. Residues Lys210, Lys214, Lys265, Lys275, and Lys279 each participate in a glycyl lysine isopeptide (Lys-Gly) (interchain with G-Cter in SUMO2) cross-link. Ser346 is subject to Phosphoserine. Lys392 is covalently cross-linked (Glycyl lysine isopeptide (Lys-Gly) (interchain with G-Cter in SUMO2)). ADP is bound by residues Gly422, Asp492, Glu508, and Lys513. Position 422 (Gly422) interacts with ATP. At Ser539 the chain carries Phosphoserine.

This sequence belongs to the TCP-1 chaperonin family. Component of the chaperonin-containing T-complex (TRiC), a hexadecamer composed of two identical back-to-back stacked rings enclosing a protein folding chamber. Each ring is made up of eight different subunits: TCP1/CCT1, CCT2, CCT3, CCT4, CCT5, CCT6A/CCT6, CCT7, CCT8. Interacts with PACRG. Interacts with DNAAF4. Interacts with DLEC1. Interacts with SPMAP2. Post-translationally, ubiquitinated by the DCX(DCAF12) complex specifically recognizes the diglutamate (Glu-Glu) at the C-terminus, leading to its degradation.

It is found in the cytoplasm. It localises to the cytoskeleton. The protein localises to the microtubule organizing center. The protein resides in the centrosome. It carries out the reaction ATP + H2O = ADP + phosphate + H(+). Functionally, component of the chaperonin-containing T-complex (TRiC), a molecular chaperone complex that assists the folding of actin, tubulin and other proteins upon ATP hydrolysis. The TRiC complex mediates the folding of WRAP53/TCAB1, thereby regulating telomere maintenance. As part of the TRiC complex may play a role in the assembly of BBSome, a complex involved in ciliogenesis regulating transports vesicles to the cilia. In Rattus norvegicus (Rat), this protein is T-complex protein 1 subunit epsilon (Cct5).